We begin with the raw amino-acid sequence, 556 residues long: Arginine--tRNA ligase (556 aa).

Positions 117–127 (PNVAKQMHVGH) match the 'HIGH' region motif.

This sequence belongs to the class-I aminoacyl-tRNA synthetase family. In terms of assembly, monomer.

It is found in the cytoplasm. The catalysed reaction is tRNA(Arg) + L-arginine + ATP = L-arginyl-tRNA(Arg) + AMP + diphosphate. This Cutibacterium acnes (strain DSM 16379 / KPA171202) (Propionibacterium acnes) protein is Arginine--tRNA ligase.